The sequence spans 455 residues: MFDIEKFWQHFNDEMRARFNEVAYNAWFKNTKPIFYNKNTHELKILVQNPVAKGYWEKNLSSQLIQSAYGYAGIEILPVFQINENNDSPERIVTPEPRYAIQLQQEKRAHKQFTKNLKLNEKYTFDNFVQGEGNKLAAGAALAVADSPGSFYNPLFIFGGVGLGKTHLMQAIGHQMLAERPNAKVVYIQSETFVNDFINSIKNKTQDQFREKYRTCDLLLVDDIQFFAKKEGIQEEFFHTFETLYNDQKQIVMTSDRLPTEIPDLSERLVSRFTWGLQVEITPPDLETRIAILRRKAEAEGLVIDDNTLDYIASQVDTNIRELEGALVKVQAYATIERADINVNLAREALVDLKLVQKNRGLQISKIQEVVANYFQTSTAELKGKKRVRQIVVPRQIAMYLSRELTDASLPKIGQEFGGKDHTTVMHAYDKIDKQIKTDTEIKSAVFDLKQMIEH.

The interval 1–74 (MFDIEKFWQH…IQSAYGYAGI (74 aa)) is domain I, interacts with DnaA modulators. Residues 74–117 (IEILPVFQINENNDSPERIVTPEPRYAIQLQQEKRAHKQFTKNL) are domain II. The domain III, AAA+ region stretch occupies residues 118–334 (KLNEKYTFDN…GALVKVQAYA (217 aa)). 4 residues coordinate ATP: Gly162, Gly164, Lys165, and Thr166. A domain IV, binds dsDNA region spans residues 335 to 455 (TIERADINVN…VFDLKQMIEH (121 aa)).

Belongs to the DnaA family. As to quaternary structure, oligomerizes as a right-handed, spiral filament on DNA at oriC.

The protein resides in the cytoplasm. Functionally, plays an essential role in the initiation and regulation of chromosomal replication. ATP-DnaA binds to the origin of replication (oriC) to initiate formation of the DNA replication initiation complex once per cell cycle. Binds the DnaA box (a 9 base pair repeat at the origin) and separates the double-stranded (ds)DNA. Forms a right-handed helical filament on oriC DNA; dsDNA binds to the exterior of the filament while single-stranded (ss)DNA is stabiized in the filament's interior. The ATP-DnaA-oriC complex binds and stabilizes one strand of the AT-rich DNA unwinding element (DUE), permitting loading of DNA polymerase. After initiation quickly degrades to an ADP-DnaA complex that is not apt for DNA replication. Binds acidic phospholipids. The chain is Chromosomal replication initiator protein DnaA from Lactobacillus helveticus (strain DPC 4571).